The sequence spans 400 residues: MVGVTSISSPAISADERSHEVDHPSSLVAHFGADQPLPLDCGIDLTPFQIAYQTYGELNADRSNAILICHALTGDQHVANVHPVTGKPGWWETLVGAGRPLDPSQYFIICANVIGGCMGSTGPASINPATGKVWGLDFPVITIPDMVRAQAMLIDRLGIDTLFAVVGGSMGGMQVLQWTAAYPERVYSALAIACSTRHSAQNIAFHELGRQAVMADPDWHNGGYADRGIHPHRGLAVARMAAHITYLSDAALHRKFGRRMQDRDLPTFSFDADFQVESYLRYQGSSFVERFDANSYLYLTRAMDYFDIAGDHGGVLAKAFAGIKTRFCVVSFTSDWLFPTSESRALVHALNASSARVSFAEIETDRGHDAFLLDVPEFFDIARAFLESAGKARGLNGRGG.

Residues 64–373 (NAILICHALT…TDRGHDAFLL (310 aa)) form the AB hydrolase-1 domain. Serine 169 acts as the Nucleophile in catalysis. Residue arginine 239 participates in substrate binding. Residues aspartate 335 and histidine 368 contribute to the active site. Position 369 (aspartate 369) interacts with substrate.

It belongs to the AB hydrolase superfamily. MetX family. Homodimer.

Its subcellular location is the cytoplasm. It catalyses the reaction L-homoserine + acetyl-CoA = O-acetyl-L-homoserine + CoA. The protein operates within amino-acid biosynthesis; L-methionine biosynthesis via de novo pathway; O-acetyl-L-homoserine from L-homoserine: step 1/1. Transfers an acetyl group from acetyl-CoA to L-homoserine, forming acetyl-L-homoserine. The protein is Homoserine O-acetyltransferase of Bradyrhizobium diazoefficiens (strain JCM 10833 / BCRC 13528 / IAM 13628 / NBRC 14792 / USDA 110).